Here is a 595-residue protein sequence, read N- to C-terminus: Glutamyl-tRNA(Gln) amidotransferase subunit B, mitochondrial (595 aa).

A mitochondrion-targeting transit peptide spans 1–114; the sequence is MPRLWYSRYL…RAPTSTVAEP (114 aa). The tract at residues 59-78 is disordered; the sequence is KEEAKRSKSQSRNGRGKKQV.

Belongs to the GatB/GatE family. GatB subfamily. In terms of assembly, subunit of the heterotrimeric GatCAB amidotransferase (AdT) complex, composed of A, B and C subunits.

It localises to the mitochondrion. It catalyses the reaction L-glutamyl-tRNA(Gln) + L-glutamine + ATP + H2O = L-glutaminyl-tRNA(Gln) + L-glutamate + ADP + phosphate + H(+). In terms of biological role, allows the formation of correctly charged Gln-tRNA(Gln) through the transamidation of misacylated Glu-tRNA(Gln) in the mitochondria. The reaction takes place in the presence of glutamine and ATP through an activated gamma-phospho-Glu-tRNA(Gln). The chain is Glutamyl-tRNA(Gln) amidotransferase subunit B, mitochondrial from Talaromyces stipitatus (strain ATCC 10500 / CBS 375.48 / QM 6759 / NRRL 1006) (Penicillium stipitatum).